A 542-amino-acid chain; its full sequence is Chaperonin GroEL 2 (542 aa).

ATP is bound by residues 29–32 (TLGP), 86–90 (DGTTT), Gly-413, 477–479 (NAA), and Asp-493.

Belongs to the chaperonin (HSP60) family. Forms a cylinder of 14 subunits composed of two heptameric rings stacked back-to-back. Interacts with the co-chaperonin GroES.

It is found in the cytoplasm. It catalyses the reaction ATP + H2O + a folded polypeptide = ADP + phosphate + an unfolded polypeptide.. Its function is as follows. Together with its co-chaperonin GroES, plays an essential role in assisting protein folding. The GroEL-GroES system forms a nano-cage that allows encapsulation of the non-native substrate proteins and provides a physical environment optimized to promote and accelerate protein folding. The sequence is that of Chaperonin GroEL 2 from Frankia alni (strain DSM 45986 / CECT 9034 / ACN14a).